The chain runs to 180 residues: UPF0340 protein LACR_0494 (180 aa).

The protein belongs to the UPF0340 family.

The sequence is that of UPF0340 protein LACR_0494 from Lactococcus lactis subsp. cremoris (strain SK11).